The chain runs to 172 residues: 3-hydroxydecanoyl-[acyl-carrier-protein] dehydratase (172 aa).

H71 is a catalytic residue.

This sequence belongs to the thioester dehydratase family. FabA subfamily. As to quaternary structure, homodimer.

It localises to the cytoplasm. The enzyme catalyses a (3R)-hydroxyacyl-[ACP] = a (2E)-enoyl-[ACP] + H2O. The catalysed reaction is (3R)-hydroxydecanoyl-[ACP] = (2E)-decenoyl-[ACP] + H2O. It catalyses the reaction (2E)-decenoyl-[ACP] = (3Z)-decenoyl-[ACP]. The protein operates within lipid metabolism; fatty acid biosynthesis. Necessary for the introduction of cis unsaturation into fatty acids. Catalyzes the dehydration of (3R)-3-hydroxydecanoyl-ACP to E-(2)-decenoyl-ACP and then its isomerization to Z-(3)-decenoyl-ACP. Can catalyze the dehydratase reaction for beta-hydroxyacyl-ACPs with saturated chain lengths up to 16:0, being most active on intermediate chain length. The protein is 3-hydroxydecanoyl-[acyl-carrier-protein] dehydratase of Serratia proteamaculans (strain 568).